Reading from the N-terminus, the 500-residue chain is Histidine--tRNA ligase (500 aa).

This sequence belongs to the class-II aminoacyl-tRNA synthetase family. As to quaternary structure, homodimer.

It localises to the cytoplasm. The enzyme catalyses tRNA(His) + L-histidine + ATP = L-histidyl-tRNA(His) + AMP + diphosphate + H(+). The protein is Histidine--tRNA ligase (hisS) of Mesorhizobium japonicum (strain LMG 29417 / CECT 9101 / MAFF 303099) (Mesorhizobium loti (strain MAFF 303099)).